We begin with the raw amino-acid sequence, 353 residues long: 4-hydroxy-3-methylbut-2-en-1-yl diphosphate synthase (flavodoxin) (353 aa).

[4Fe-4S] cluster is bound by residues Cys-268, Cys-271, Cys-303, and Glu-310.

The protein belongs to the IspG family. Requires [4Fe-4S] cluster as cofactor.

It carries out the reaction (2E)-4-hydroxy-3-methylbut-2-enyl diphosphate + oxidized [flavodoxin] + H2O + 2 H(+) = 2-C-methyl-D-erythritol 2,4-cyclic diphosphate + reduced [flavodoxin]. It functions in the pathway isoprenoid biosynthesis; isopentenyl diphosphate biosynthesis via DXP pathway; isopentenyl diphosphate from 1-deoxy-D-xylulose 5-phosphate: step 5/6. Converts 2C-methyl-D-erythritol 2,4-cyclodiphosphate (ME-2,4cPP) into 1-hydroxy-2-methyl-2-(E)-butenyl 4-diphosphate. This is 4-hydroxy-3-methylbut-2-en-1-yl diphosphate synthase (flavodoxin) from Ruminiclostridium cellulolyticum (strain ATCC 35319 / DSM 5812 / JCM 6584 / H10) (Clostridium cellulolyticum).